We begin with the raw amino-acid sequence, 128 residues long: LIM domain-containing protein 2 (128 aa).

Position 1 is an N-acetylmethionine (Met-1). A disordered region spans residues 1–25 (MFQAAGAAQATPSHEAKGGGSSSTV). The LIM zinc-binding domain maps to 39 to 99 (ETCAACQKTV…KPHFQQLFKS (61 aa)). Residues Cys-41, Cys-44, His-62, Cys-65, Cys-68, Cys-71, Cys-89, and His-92 each contribute to the Zn(2+) site.

As to quaternary structure, interacts with ILK.

It is found in the cytoplasm. The protein resides in the nucleus. Functionally, acts as an activator of the protein-kinase ILK, thereby regulating cell motility. The polypeptide is LIM domain-containing protein 2 (LIMD2) (Bos taurus (Bovine)).